The chain runs to 248 residues: 2,3-bisphosphoglycerate-dependent phosphoglycerate mutase (248 aa).

Residues 8–15 (RHGESGWN) and arginine 58 contribute to the substrate site. The active-site Tele-phosphohistidine intermediate is the histidine 9. The disordered stretch occupies residues 82–101 (GTGEDRTEREDGSRKDRKEK). Glutamate 124 (proton donor/acceptor) is an active-site residue. Substrate contacts are provided by residues 124–127 (ERYY) and lysine 135.

The protein belongs to the phosphoglycerate mutase family. BPG-dependent PGAM subfamily.

It carries out the reaction (2R)-2-phosphoglycerate = (2R)-3-phosphoglycerate. The protein operates within carbohydrate degradation; glycolysis; pyruvate from D-glyceraldehyde 3-phosphate: step 3/5. Its function is as follows. Catalyzes the interconversion of 2-phosphoglycerate and 3-phosphoglycerate. The polypeptide is 2,3-bisphosphoglycerate-dependent phosphoglycerate mutase (Methanosarcina acetivorans (strain ATCC 35395 / DSM 2834 / JCM 12185 / C2A)).